We begin with the raw amino-acid sequence, 118 residues long: Putative pterin-4-alpha-carbinolamine dehydratase (118 aa).

It belongs to the pterin-4-alpha-carbinolamine dehydratase family.

It catalyses the reaction (4aS,6R)-4a-hydroxy-L-erythro-5,6,7,8-tetrahydrobiopterin = (6R)-L-erythro-6,7-dihydrobiopterin + H2O. This is Putative pterin-4-alpha-carbinolamine dehydratase from Pseudomonas paraeruginosa (strain DSM 24068 / PA7) (Pseudomonas aeruginosa (strain PA7)).